A 563-amino-acid polypeptide reads, in one-letter code: Inositol-3-phosphate synthase 1-A (563 aa).

Belongs to the myo-inositol 1-phosphate synthase family. It depends on NAD(+) as a cofactor.

The protein localises to the cytoplasm. The enzyme catalyses D-glucose 6-phosphate = 1D-myo-inositol 3-phosphate. Its pathway is polyol metabolism; myo-inositol biosynthesis; myo-inositol from D-glucose 6-phosphate: step 1/2. In terms of biological role, key enzyme in myo-inositol biosynthesis pathway that catalyzes the conversion of glucose 6-phosphate to 1-myo-inositol 1-phosphate in a NAD-dependent manner. Rate-limiting enzyme in the synthesis of all inositol-containing compounds. This Xenopus laevis (African clawed frog) protein is Inositol-3-phosphate synthase 1-A (isyna1-a).